The primary structure comprises 231 residues: Cytochrome c oxidase assembly factor 7 (231 aa).

Ala2 bears the N-acetylalanine mark. 5 Sel1-like repeats span residues 34-66, 68-104, 108-146, 147-183, and 184-219; these read PDGCYRLVDYLEGIRKNFDEAAKVLKFNCEENQ, SDSCYKLGAYYVTGKGGLTQDLKAAARCFLMACEKPG, IAACHNVGLLAHDGQVNEDGQPDLGKARDYYTRACDGGY, TSSCFNLSAMFLQGAPGFPKDMDLACKYSMKACDLGH, and IWACANASRMYKLGDGVDKDEAKAEVLKNRAQQLHK.

It belongs to the hcp beta-lactamase family. Interacts with CHCHD4/MIA40 through transient intermolecular disulfide bonds.

The protein localises to the mitochondrion intermembrane space. In terms of biological role, required for assembly of mitochondrial respiratory chain complex I and complex IV. The protein is Cytochrome c oxidase assembly factor 7 (COA7) of Homo sapiens (Human).